The primary structure comprises 331 residues: Protein RecA (331 aa).

Position 66 to 73 (66 to 73 (GPESSGKT)) interacts with ATP.

The protein belongs to the RecA family.

It is found in the cytoplasm. Can catalyze the hydrolysis of ATP in the presence of single-stranded DNA, the ATP-dependent uptake of single-stranded DNA by duplex DNA, and the ATP-dependent hybridization of homologous single-stranded DNAs. It interacts with LexA causing its activation and leading to its autocatalytic cleavage. This Acholeplasma laidlawii (strain PG-8A) protein is Protein RecA.